Consider the following 99-residue polypeptide: Small ribosomal subunit protein uS17 (99 aa).

Belongs to the universal ribosomal protein uS17 family. As to quaternary structure, part of the 30S ribosomal subunit.

Its function is as follows. One of the primary rRNA binding proteins, it binds specifically to the 5'-end of 16S ribosomal RNA. The protein is Small ribosomal subunit protein uS17 of Thermosipho melanesiensis (strain DSM 12029 / CIP 104789 / BI429).